Consider the following 185-residue polypeptide: Ribosome-recycling factor (185 aa).

This sequence belongs to the RRF family.

The protein resides in the cytoplasm. In terms of biological role, responsible for the release of ribosomes from messenger RNA at the termination of protein biosynthesis. May increase the efficiency of translation by recycling ribosomes from one round of translation to another. The protein is Ribosome-recycling factor of Shewanella pealeana (strain ATCC 700345 / ANG-SQ1).